The chain runs to 483 residues: NADH-quinone oxidoreductase subunit N (483 aa).

14 consecutive transmembrane segments (helical) span residues 13–33 (ALPE…DAAV), 39–57 (YLAY…FLTV), 76–96 (PLSD…LVYS), 110–130 (FFVL…ASHF), 131–151 (LTLY…VALQ), 165–185 (FVLG…VYGV), 206–226 (IPLV…LGAV), 240–260 (PTAM…AFVV), 277–297 (MLVI…IAQS), 302–322 (MFAY…LAGS), 330–350 (MFYV…ILLL), 373–393 (LAFV…TVGF), 406–426 (IGYV…AFYY), and 459–479 (LAVL…VQAI).

The protein belongs to the complex I subunit 2 family. As to quaternary structure, NDH-1 is composed of 14 different subunits. Subunits NuoA, H, J, K, L, M, N constitute the membrane sector of the complex.

Its subcellular location is the cell inner membrane. The catalysed reaction is a quinone + NADH + 5 H(+)(in) = a quinol + NAD(+) + 4 H(+)(out). Functionally, NDH-1 shuttles electrons from NADH, via FMN and iron-sulfur (Fe-S) centers, to quinones in the respiratory chain. The immediate electron acceptor for the enzyme in this species is believed to be ubiquinone. Couples the redox reaction to proton translocation (for every two electrons transferred, four hydrogen ions are translocated across the cytoplasmic membrane), and thus conserves the redox energy in a proton gradient. This Thiobacillus denitrificans (strain ATCC 25259 / T1) protein is NADH-quinone oxidoreductase subunit N.